A 435-amino-acid polypeptide reads, in one-letter code: 3-phosphoshikimate 1-carboxyvinyltransferase (435 aa).

Residues Lys21, Ser22, and Arg26 each contribute to the 3-phosphoshikimate site. Phosphoenolpyruvate is bound at residue Lys21. 2 residues coordinate phosphoenolpyruvate: Gly100 and Arg128. Residues Ser171, Ser172, Gln173, Ser199, Asp313, and Lys340 each contribute to the 3-phosphoshikimate site. Gln173 is a binding site for phosphoenolpyruvate. The active-site Proton acceptor is the Asp313. Phosphoenolpyruvate contacts are provided by Arg344, Arg386, and Lys412.

Belongs to the EPSP synthase family. In terms of assembly, monomer.

The protein localises to the cytoplasm. It catalyses the reaction 3-phosphoshikimate + phosphoenolpyruvate = 5-O-(1-carboxyvinyl)-3-phosphoshikimate + phosphate. Its pathway is metabolic intermediate biosynthesis; chorismate biosynthesis; chorismate from D-erythrose 4-phosphate and phosphoenolpyruvate: step 6/7. Catalyzes the transfer of the enolpyruvyl moiety of phosphoenolpyruvate (PEP) to the 5-hydroxyl of shikimate-3-phosphate (S3P) to produce enolpyruvyl shikimate-3-phosphate and inorganic phosphate. The chain is 3-phosphoshikimate 1-carboxyvinyltransferase from Clostridium novyi (strain NT).